The chain runs to 353 residues: Feruloyl esterase B (353 aa).

An N-terminal signal peptide occupies residues 1 to 18 (MAIPLVLVLAWLLPVVLA). Residues 19–291 (ASLTQVNNFG…VSVVLDWFGI (273 aa)) form a catalytic region. The Charge relay system role is filled by S136. N179 and N246 each carry an N-linked (GlcNAc...) asparagine glycan. One can recognise a CBM1 domain in the interval 317-353 (CTAAHWAQCGGIGYSGCTACASPYTCQKANDYYSQCL).

The protein belongs to the carbohydrate esterase 1 (CE1) family. Feruloyl esterase type B subfamily. Glycosylated.

The protein localises to the secreted. The enzyme catalyses feruloyl-polysaccharide + H2O = ferulate + polysaccharide.. With respect to regulation, inhibited by the specific serine esterase inhibitor AEBSF. Functionally, involved in degradation of plant cell walls. Hydrolyzes the feruloyl-arabinose ester bond in arabinoxylans, and the feruloyl-galactose and feruloyl-arabinose ester bonds in pectin. Binds strongly to cellulose. The protein is Feruloyl esterase B (FAEB) of Talaromyces funiculosus (Fruitlet core rot fungus).